The sequence spans 572 residues: Probable D-xylulose kinase A (572 aa).

Residues H95, R166, D282, and N283 each coordinate substrate. ATP contacts are provided by residues W365, 470-471 (GG), and N474.

Belongs to the FGGY kinase family.

The protein resides in the cytoplasm. The catalysed reaction is D-xylulose + ATP = D-xylulose 5-phosphate + ADP + H(+). Its function is as follows. Highly specific D-xylulose kinase which participates in the catabolism of xylose. Xylose is a major component of hemicelluloses such as xylan. Most fungi utilize D-xylose via three enzymatic reactions, xylose reductase (XR), xylitol dehydrogenase (XDH), and xylulokinase, to form xylulose 5-phosphate, which enters pentose phosphate pathway. The polypeptide is Probable D-xylulose kinase A (xkiA) (Aspergillus oryzae (strain ATCC 42149 / RIB 40) (Yellow koji mold)).